The chain runs to 187 residues: CASP-like protein 2C1 (187 aa).

Over 1–14 (MVAAARVVSGVKAE) the chain is Cytoplasmic. A helical membrane pass occupies residues 15 to 35 (GLLRGACAALAAAAALLLGLS). At 36-54 (TQTETVLLVRKKGTVKDVQ) the chain is on the extracellular side. A helical membrane pass occupies residues 55-75 (ALWVLAMAAASAAGYHLLQLL). Topologically, residues 76–97 (KCLYLGRGGGRALAWTCLLLDK) are cytoplasmic. Residues 98–118 (ACAYATFATTVAAAQACVVAL) traverse the membrane as a helical segment. The Extracellular portion of the chain corresponds to 119–139 (DGAHALQWTKLCNIYTRFCEQ). The chain crosses the membrane as a helical span at residues 140–160 (VAGSLVLGMLAAVGTAVLSAA). The Cytoplasmic segment spans residues 161–187 (SARNVFRHYYCSSHSPPAPPPETCDAH).

Belongs to the Casparian strip membrane proteins (CASP) family. In terms of assembly, homodimer and heterodimers.

The protein localises to the cell membrane. This chain is CASP-like protein 2C1, found in Zea mays (Maize).